The primary structure comprises 359 residues: Glycerol-1-phosphate dehydrogenase [NAD(P)+] (359 aa).

NAD(+) is bound by residues 107 to 111 and 129 to 132; these read GRVID and TAAS. Substrate is bound at residue Asp-134. Ser-138 lines the NAD(+) pocket. Asp-181 contacts substrate. Asp-181 and His-261 together coordinate Zn(2+). A substrate-binding site is contributed by His-265. Position 277 (His-277) interacts with Zn(2+).

This sequence belongs to the glycerol-1-phosphate dehydrogenase family. It depends on Zn(2+) as a cofactor.

Its subcellular location is the cytoplasm. The catalysed reaction is sn-glycerol 1-phosphate + NAD(+) = dihydroxyacetone phosphate + NADH + H(+). The enzyme catalyses sn-glycerol 1-phosphate + NADP(+) = dihydroxyacetone phosphate + NADPH + H(+). It participates in membrane lipid metabolism; glycerophospholipid metabolism. Its function is as follows. Catalyzes the NAD(P)H-dependent reduction of dihydroxyacetonephosphate (DHAP or glycerone phosphate) to glycerol 1-phosphate (G1P). The G1P thus generated is used as the glycerophosphate backbone of phospholipids in the cellular membranes of Archaea. The polypeptide is Glycerol-1-phosphate dehydrogenase [NAD(P)+] (Methanospirillum hungatei JF-1 (strain ATCC 27890 / DSM 864 / NBRC 100397 / JF-1)).